The sequence spans 305 residues: tRNA dimethylallyltransferase (305 aa).

8-15 (GPTAVGKT) is a binding site for ATP. 10–15 (TAVGKT) provides a ligand contact to substrate. The segment at 33 to 36 (DSRQ) is interaction with substrate tRNA.

It belongs to the IPP transferase family. Monomer. The cofactor is Mg(2+).

The enzyme catalyses adenosine(37) in tRNA + dimethylallyl diphosphate = N(6)-dimethylallyladenosine(37) in tRNA + diphosphate. Its function is as follows. Catalyzes the transfer of a dimethylallyl group onto the adenine at position 37 in tRNAs that read codons beginning with uridine, leading to the formation of N6-(dimethylallyl)adenosine (i(6)A). This chain is tRNA dimethylallyltransferase, found in Thermotoga maritima (strain ATCC 43589 / DSM 3109 / JCM 10099 / NBRC 100826 / MSB8).